The sequence spans 237 residues: Ribonuclease 3 (237 aa).

In terms of domain architecture, RNase III spans V5 to G136. A Mg(2+)-binding site is contributed by E49. The active site involves D53. D122 and E125 together coordinate Mg(2+). The active site involves E125. The 70-residue stretch at D163–G232 folds into the DRBM domain. The span at I185–G208 shows a compositional bias: basic and acidic residues. The tract at residues I185–R237 is disordered. A compositionally biased stretch (low complexity) spans Q216 to E231.

This sequence belongs to the ribonuclease III family. Homodimer. The cofactor is Mg(2+).

Its subcellular location is the cytoplasm. The enzyme catalyses Endonucleolytic cleavage to 5'-phosphomonoester.. Functionally, digests double-stranded RNA. Involved in the processing of primary rRNA transcript to yield the immediate precursors to the large and small rRNAs (23S and 16S). Processes some mRNAs, and tRNAs when they are encoded in the rRNA operon. Processes pre-crRNA and tracrRNA of type II CRISPR loci if present in the organism. The polypeptide is Ribonuclease 3 (Roseiflexus sp. (strain RS-1)).